Consider the following 317-residue polypeptide: Protoheme IX farnesyltransferase (317 aa).

A run of 6 helical transmembrane segments spans residues 25–45 (FFALLKPRVMALVVFTALVGM), 54–74 (PVIGAVSLLMIAVGAGASGCL), 117–137 (LMLGLAANWLAAGLLAFTIVF), 167–189 (IGQAVVTGSVGIEGIILFLIIFI), 244–264 (LGFGGLIYGLVALLGGLAMLV), and 281–301 (AAMSLFGFSILYLFLLFSALL).

This sequence belongs to the UbiA prenyltransferase family. Protoheme IX farnesyltransferase subfamily.

The protein localises to the cell inner membrane. The enzyme catalyses heme b + (2E,6E)-farnesyl diphosphate + H2O = Fe(II)-heme o + diphosphate. The protein operates within porphyrin-containing compound metabolism; heme O biosynthesis; heme O from protoheme: step 1/1. Its function is as follows. Converts heme B (protoheme IX) to heme O by substitution of the vinyl group on carbon 2 of heme B porphyrin ring with a hydroxyethyl farnesyl side group. In Methylobacterium nodulans (strain LMG 21967 / CNCM I-2342 / ORS 2060), this protein is Protoheme IX farnesyltransferase.